Consider the following 205-residue polypeptide: Small ribosomal subunit protein uS4 (205 aa).

Residues 19–45 are disordered; the sequence is IWGRSKSPVNRREYGPGQHGQRRKGKL. Residues 94–157 enclose the S4 RNA-binding domain; sequence RRLDAVVYRA…KQMALVLEAV (64 aa).

It belongs to the universal ribosomal protein uS4 family. As to quaternary structure, part of the 30S ribosomal subunit. Contacts protein S5. The interaction surface between S4 and S5 is involved in control of translational fidelity.

Functionally, one of the primary rRNA binding proteins, it binds directly to 16S rRNA where it nucleates assembly of the body of the 30S subunit. Its function is as follows. With S5 and S12 plays an important role in translational accuracy. The sequence is that of Small ribosomal subunit protein uS4 from Azorhizobium caulinodans (strain ATCC 43989 / DSM 5975 / JCM 20966 / LMG 6465 / NBRC 14845 / NCIMB 13405 / ORS 571).